We begin with the raw amino-acid sequence, 444 residues long: UDP-N-acetylmuramate--L-alanine ligase (444 aa).

110–116 (GAHGKTS) is a binding site for ATP.

The protein belongs to the MurCDEF family. Phosphorylated by StkP in vitro. Dephosphorylated by PhpP in vitro.

It localises to the cytoplasm. It carries out the reaction UDP-N-acetyl-alpha-D-muramate + L-alanine + ATP = UDP-N-acetyl-alpha-D-muramoyl-L-alanine + ADP + phosphate + H(+). Its pathway is cell wall biogenesis; peptidoglycan biosynthesis. Its function is as follows. Cell wall formation. This is UDP-N-acetylmuramate--L-alanine ligase from Streptococcus pneumoniae serotype 4 (strain ATCC BAA-334 / TIGR4).